Here is a 296-residue protein sequence, read N- to C-terminus: GTPase Era (296 aa).

Residues 3 to 170 (KSGFITIVGR…LELMVKYLPE (168 aa)) form the Era-type G domain. A G1 region spans residues 11 to 18 (GRPNVGKS). 11 to 18 (GRPNVGKS) contributes to the GTP binding site. The segment at 37-41 (QTTRN) is G2. The tract at residues 58–61 (DTPG) is G3. Residues 58 to 62 (DTPGI) and 120 to 123 (NKVD) contribute to the GTP site. The interval 120–123 (NKVD) is G4. Positions 149–151 (ISA) are G5. The KH type-2 domain occupies 201–278 (LSQEVPHGIA…NIKIWVKVRK (78 aa)).

The protein belongs to the TRAFAC class TrmE-Era-EngA-EngB-Septin-like GTPase superfamily. Era GTPase family. In terms of assembly, monomer.

Its subcellular location is the cytoplasm. The protein resides in the cell membrane. In terms of biological role, an essential GTPase that binds both GDP and GTP, with rapid nucleotide exchange. Plays a role in 16S rRNA processing and 30S ribosomal subunit biogenesis and possibly also in cell cycle regulation and energy metabolism. This chain is GTPase Era, found in Clostridium perfringens (strain 13 / Type A).